We begin with the raw amino-acid sequence, 552 residues long: Non-structural protein NS1 (552 aa).

This sequence belongs to the orbivirus non-structural protein NS1 family.

In Antilocapra americana (Pronghorn), this protein is Non-structural protein NS1 (Segment-5).